The following is a 314-amino-acid chain: Protoheme IX farnesyltransferase (314 aa).

Transmembrane regions (helical) follow at residues 31–51, 52–72, 119–139, 152–172, 179–199, 225–245, 247–267, and 284–304; these read VMSL…GHFH, PVLA…SGAL, ILVN…YVVI, IVIG…AVTG, LLLF…LALF, ILLY…LGYF, AVYG…AINV, and FAFS…EVVF.

The protein belongs to the UbiA prenyltransferase family. Protoheme IX farnesyltransferase subfamily.

It localises to the cell inner membrane. The enzyme catalyses heme b + (2E,6E)-farnesyl diphosphate + H2O = Fe(II)-heme o + diphosphate. The protein operates within porphyrin-containing compound metabolism; heme O biosynthesis; heme O from protoheme: step 1/1. Converts heme B (protoheme IX) to heme O by substitution of the vinyl group on carbon 2 of heme B porphyrin ring with a hydroxyethyl farnesyl side group. This chain is Protoheme IX farnesyltransferase, found in Bradyrhizobium diazoefficiens (strain JCM 10833 / BCRC 13528 / IAM 13628 / NBRC 14792 / USDA 110).